The sequence spans 334 residues: Fructose-1,6-bisphosphatase class 1 (334 aa).

The Mg(2+) site is built by Glu-90, Asp-113, Leu-115, and Asp-116. Residues 116 to 119 (DGSS), Asn-209, Tyr-242, and Lys-272 contribute to the substrate site. Glu-278 provides a ligand contact to Mg(2+).

It belongs to the FBPase class 1 family. In terms of assembly, homotetramer. Mg(2+) serves as cofactor.

The protein resides in the cytoplasm. It catalyses the reaction beta-D-fructose 1,6-bisphosphate + H2O = beta-D-fructose 6-phosphate + phosphate. The protein operates within carbohydrate biosynthesis; gluconeogenesis. The protein is Fructose-1,6-bisphosphatase class 1 of Actinobacillus succinogenes (strain ATCC 55618 / DSM 22257 / CCUG 43843 / 130Z).